The following is a 228-amino-acid chain: N-(5'-phosphoribosyl)anthranilate isomerase (228 aa).

This sequence belongs to the TrpF family.

It catalyses the reaction N-(5-phospho-beta-D-ribosyl)anthranilate = 1-(2-carboxyphenylamino)-1-deoxy-D-ribulose 5-phosphate. The protein operates within amino-acid biosynthesis; L-tryptophan biosynthesis; L-tryptophan from chorismate: step 3/5. The chain is N-(5'-phosphoribosyl)anthranilate isomerase from Azorhizobium caulinodans (strain ATCC 43989 / DSM 5975 / JCM 20966 / LMG 6465 / NBRC 14845 / NCIMB 13405 / ORS 571).